The primary structure comprises 20 residues: M-poneritoxin-Ng1f (20 aa).

Lys20 is modified (lysine amide).

In terms of tissue distribution, expressed by the venom gland.

It is found in the secreted. The protein resides in the target cell membrane. Its function is as follows. Has activity against Gram-positive bacteria. Has insecticidal and hemolytic activities. May act by disrupting the integrity of the bacterial cell membrane. The polypeptide is M-poneritoxin-Ng1f (Neoponera goeldii (Ponerine ant)).